Here is a 1098-residue protein sequence, read N- to C-terminus: Tudor domain-containing protein 7 (1098 aa).

2 HTH OST-type domains span residues 3–76 (EGDL…YAMA) and 233–302 (KMDE…YPAK). Ser319 carries the post-translational modification Phosphoserine. The region spanning 337–406 (MAGDFKEKVA…PQKAILYAKL (70 aa)) is the HTH OST-type 3 domain. Tudor domains follow at residues 513–570 (AVNV…FCSL) and 703–760 (LPFC…FLQE). Position 859 is a phosphoserine (Ser859). The interval 861-1098 (NSKNGNMRVS…EYLIELSKVN (238 aa)) is interaction with CDK17. Positions 893–1098 (TSSFSTEELP…EYLIELSKVN (206 aa)) are interaction with CABLES1.

This sequence belongs to the TDRD7 family. As to quaternary structure, found in a mRNP complex, at least composed of TDRD1, TDRD6, TDRD7 and DDX4. Found in a complex containing CABLES1, CDK16 and CDK17. Interacts with CABLES1, CDK17 and PIWIL1.

It localises to the cytoplasm. Its function is as follows. Component of specific cytoplasmic RNA granules involved in post-transcriptional regulation of specific genes: probably acts by binding to specific mRNAs and regulating their translation. Required for lens transparency during lens development, by regulating translation of genes such as CRYBB3 and HSPB1 in the developing lens. Also required during spermatogenesis. The chain is Tudor domain-containing protein 7 (TDRD7) from Pongo abelii (Sumatran orangutan).